Consider the following 360-residue polypeptide: Phospho-N-acetylmuramoyl-pentapeptide-transferase (360 aa).

The next 10 membrane-spanning stretches (helical) occupy residues 25-45, 73-93, 97-117, 132-152, 168-188, 199-219, 236-256, 263-283, 288-308, and 338-358; these read RGIL…PWMI, TMGG…WADL, YVWV…VDDY, WKYF…YMTA, VSIP…VGSS, GLAI…CYLS, AGEL…FLWF, VFMG…IAVI, IVLF…VIQV, and VIVR…ATLK.

The protein belongs to the glycosyltransferase 4 family. MraY subfamily. Requires Mg(2+) as cofactor.

Its subcellular location is the cell inner membrane. It catalyses the reaction UDP-N-acetyl-alpha-D-muramoyl-L-alanyl-gamma-D-glutamyl-meso-2,6-diaminopimeloyl-D-alanyl-D-alanine + di-trans,octa-cis-undecaprenyl phosphate = di-trans,octa-cis-undecaprenyl diphospho-N-acetyl-alpha-D-muramoyl-L-alanyl-D-glutamyl-meso-2,6-diaminopimeloyl-D-alanyl-D-alanine + UMP. Its pathway is cell wall biogenesis; peptidoglycan biosynthesis. Its function is as follows. Catalyzes the initial step of the lipid cycle reactions in the biosynthesis of the cell wall peptidoglycan: transfers peptidoglycan precursor phospho-MurNAc-pentapeptide from UDP-MurNAc-pentapeptide onto the lipid carrier undecaprenyl phosphate, yielding undecaprenyl-pyrophosphoryl-MurNAc-pentapeptide, known as lipid I. In Pseudomonas fluorescens (strain ATCC BAA-477 / NRRL B-23932 / Pf-5), this protein is Phospho-N-acetylmuramoyl-pentapeptide-transferase.